We begin with the raw amino-acid sequence, 388 residues long: Protein-glutamate methylesterase/protein-glutamine glutaminase (388 aa).

The region spanning Arg-20–His-138 is the Response regulatory domain. Asp-71 is modified (4-aspartylphosphate). Residues Pro-193–Asp-386 form the CheB-type methylesterase domain. Catalysis depends on residues Ser-204, His-232, and Asp-328.

It belongs to the CheB family. Post-translationally, phosphorylated by CheA. Phosphorylation of the N-terminal regulatory domain activates the methylesterase activity.

It localises to the cytoplasm. It carries out the reaction [protein]-L-glutamate 5-O-methyl ester + H2O = L-glutamyl-[protein] + methanol + H(+). The catalysed reaction is L-glutaminyl-[protein] + H2O = L-glutamyl-[protein] + NH4(+). Functionally, involved in chemotaxis. Part of a chemotaxis signal transduction system that modulates chemotaxis in response to various stimuli. Catalyzes the demethylation of specific methylglutamate residues introduced into the chemoreceptors (methyl-accepting chemotaxis proteins or MCP) by CheR. Also mediates the irreversible deamidation of specific glutamine residues to glutamic acid. The sequence is that of Protein-glutamate methylesterase/protein-glutamine glutaminase from Rhodopseudomonas palustris (strain HaA2).